An 885-amino-acid polypeptide reads, in one-letter code: Eukaryotic translation initiation factor 3 subunit C (885 aa).

Residues 1–81 form a disordered region; it reads MSFFAKLQGS…SDSDDERQAV (81 aa). A compositionally biased stretch (low complexity) spans 9 to 28; it reads GSDSESSSGSESEESILSGS. Over residues 55–76 the composition is skewed to acidic residues; that stretch reads EESESEEESSDEDEEEMSDSDD. A PCI domain is found at 624–797; that stretch reads FHMHLNVELL…GVVIFHRVEQ (174 aa). Residues 822–885 are disordered; it reads LDVKLGNQGQ…TTMGRRVTAQ (64 aa). Over residues 855 to 872 the composition is skewed to gly residues; it reads RGTYRGRGGRGGRGGFNQ.

It belongs to the eIF-3 subunit C family. In terms of assembly, component of the eukaryotic translation initiation factor 3 (eIF-3) complex.

Its subcellular location is the cytoplasm. Component of the eukaryotic translation initiation factor 3 (eIF-3) complex, which is involved in protein synthesis of a specialized repertoire of mRNAs and, together with other initiation factors, stimulates binding of mRNA and methionyl-tRNAi to the 40S ribosome. The eIF-3 complex specifically targets and initiates translation of a subset of mRNAs involved in cell proliferation. The sequence is that of Eukaryotic translation initiation factor 3 subunit C from Cryptococcus neoformans var. neoformans serotype D (strain B-3501A) (Filobasidiella neoformans).